The primary structure comprises 256 residues: Ciliary microtubule associated protein 1A (256 aa).

STPGR repeat units lie at residues 66-92 (PGPG…IYGR), 181-206 (PGPG…MTAR), and 217-242 (PGPG…FGIR).

Belongs to the CIMAP family.

The protein resides in the cytoplasm. It is found in the cytoskeleton. Its subcellular location is the flagellum axoneme. In terms of biological role, outer dense fibers are filamentous structures located on the outside of the axoneme in the midpiece and principal piece of the mammalian sperm tail. May help to maintain the passive elastic structures and elastic recoil of the sperm tail. In Xenopus tropicalis (Western clawed frog), this protein is Ciliary microtubule associated protein 1A (cimap1a).